A 2231-amino-acid chain; its full sequence is MNSNNPDNNNSNNINNNNKDKDIAPNSDVQLATVYTKAKSYIPQIEQVYQGTNPNIQEAKLLGELLQVLAEVPKGTHLFCDPILEPISIFSLTIFSFNEEATATWLKNHFNPILSVCDKCILNFARGKCKMLQHFAIQRHVPHEHVAKFNDIVCQWRVEAVFPILRNISVNDNTGINITNEIETAMYECLCNPHMLRLNKQLKATFEAIFKFFYDTKHRLLDVTNPLSIKTFISGVIFCWCEGSKEENEWSRAFLKDLYSRNFHINLSNLTPDIIEEVYIHILFLQNPANWTEIVVSQFWSRLLPVFNLFDKDVFIEYFQVPKNVESLKKTFKFPLEPIFKMWYNHLSKSYHDKPLDFLLRGLTMFLNKFGSEFWSKIEPFTFHSILDIIFNRDSFPIKLIKIQDNPIVEHQTEVYFQLTGSVTDLLSWTLPFYHALSPSKRIQMVRKVSMAFLRIIANYPSLKSIPKACLMNSATALLRAVLTIKENERAMLYKNDEFETVLLTKTDSRALLNNPLIQDIIIRSASNPNDFYPGLGAASASVATSTMMVLAECIDFDILLLCHRTFKLYSGKPISEIPISTNVLENVTNKIDLRSFHDGPLLAKQLLVSLKNINGLLIVPSNTAVAEAHNALNQKFLLLSTRLMEKFADILPGQLSKILADEDASQGFWSCIFSSDKHLYQAATNILYNTFDVEGRLEGILAILNSNLTVNLKNINVMLQRLINCEFYEPCPRAVRVLMDVVSAFVDPISGVFANFQTLKSQNTEKEFLKFWESCWLFLDTIYKFTLKWASKYDYSELENFTKDTLDLSRSLVDSFREFSDILHDQTKNLLLNVLETFKNMLYWLRLSDEVLLESCVRLIISTSDLAHEKHVKVDDSLVEMMAKYASKAKRFSNKLTEQQASEILQKAKIFNKALTEEVATEAENYRKEKELSRLGKVIDLTDSVPASPSLSPSLSSTIASSSAESRADYLQRKALSSSITGRPRVAQPKITSFGTFQSSANAKLHRTKPVKPLSKMELARMQLLNNRVVHPPSAPAFHTKSRGLSNKNDDSSSEESDNDIESARELFAIAKAKGKGIQTVDINGKVVKRQTAAELAKQELEHMRKRLNVDMNPLYEIILQWDYTRNSEYPDDEPIGNYSDVKDFFNSPADYQKVMKPLLLLESWQGLCSSRDREDYKPFSIIVGNRTAVSDFYDVYASVAKQVIQDCGISESDLIVMAYLPDFRPDKRLSSDDFKKAQHTCLAKVRTLKNTKGGNVDVTLRIHRNHSFSKFLTLRSEIYCVKVMQMTTIEREYSTLEGLEYYDLVGQILQAKPSPPVNVDAAEIETVKKSYKLNTSQAEAIVNSVSKEGFSLIQGPPGTGKTKTILGIIGYFLSTKNASSSNVIKVPLEKNSSNTEQLLKKQKILICAPSNAAVDEICLRLKSGVYDKQGHQFKPQLVRVGRSDVVNVAIKDLTLEELVDKRIGERNYEIRTDPELERKFNNAVTKRRELRGKLDSESGNPESPMSTEDISKLQLKIRELSKIINELGRDRDEMREKNSVNYRNRDLDRRNAQAHILAVSDIICSTLSGSAHDVLATMGIKFDTVIIDEACQCTELSSIIPLRYGGKRCIMVGDPNQLPPTVLSGAASNFKYNQSLFVRMEKNSSPYLLDVQYRMHPSISKFPSSEFYQGRLKDGPGMDILNKRPWHQLEPLAPYKFFDIISGRQEQNAKTMSYTNMEEIRVAIELVDYLFRKFDNKIDFTGKIGIISPYREQMQKMRKEFARYFGGMINKSIDFNTIDGFQGQEKEIILISCVRADDTKSSVGFLKDFRRMNVALTRAKTSIWVLGHQRSLAKSKLWRDLIEDAKDRSCLAYACSGFLDPRNNRAQSILRKFNVPVPSEQEDDYKLPMEYITQGPDEVKSNKDTKKRRVVDEGEEADKAVKKKKKEKKKEKKKSKADDKKKNNKKAESPSTSSGTKKKSSIFGGMSVPSAVVPKTFPDVDSNKKAAAVVGKKKNNKHVCFSDDVSFIPRNDEPEIKVTRSLSSVLKEKQLGLKETRTISPPEISNNEDDDDEDDYTPSISDSSLMKSEANGRNNRVASHNQNFSASIYDDPQVSQAKQTQVPAAITKHRSSNSVLSGGSSRILTASDYGEPNQNGQNGANRTLSQHVGNANQYSTAPVGTGELHETLPAHPQDSYPAEAEDPYDLNPHPQPQSSAFKGPGSGPTGTRNSSRRNASSSPFIPKKRKPRS.

Low complexity predominate over residues 1–17; the sequence is MNSNNPDNNNSNNINNN. Disordered stretches follow at residues 1-24 and 1032-1061; these read MNSNNPDNNNSNNINNNNKDKDIA and HPPSAPAFHTKSRGLSNKNDDSSSEESDND. Residues Gln1339 and 1360 to 1364 contribute to the ATP site; that span reads GTGKT. The disordered stretch occupies residues 1491–1511; sequence ELRGKLDSESGNPESPMSTED. Residues 1499–1510 show a composition bias toward polar residues; sequence ESGNPESPMSTE. Gln1619, Tyr1655, and Glu1787 together coordinate ATP. Disordered stretches follow at residues 1894–1993 and 2032–2231; these read ITQG…AVVG and QLGL…KPRS. Residues 1909-1927 carry the Nuclear localization signal motif; that stretch reads KRRVVDEGEEADKAVKKKK. The segment covering 1923-1937 has biased composition (basic residues); sequence VKKKKKEKKKEKKKS. Positions 1938–1950 are enriched in basic and acidic residues; sequence KADDKKKNNKKAE. A compositionally biased stretch (acidic residues) spans 2048 to 2058; the sequence is NNEDDDDEDDY. 2 stretches are compositionally biased toward polar residues: residues 2060 to 2088 and 2095 to 2104; these read PSISDSSLMKSEANGRNNRVASHNQNFSA and QVSQAKQTQV. Residues 2114–2123 are compositionally biased toward low complexity; it reads SNSVLSGGSS. Polar residues predominate over residues 2134 to 2160; the sequence is PNQNGQNGANRTLSQHVGNANQYSTAP. A compositionally biased stretch (low complexity) spans 2210-2220; sequence RNSSRRNASSS.

It belongs to the DNA2/NAM7 helicase family. Interacts with RAD2, RNT1 and RPB1. Binds to multiple snoRNAs.

Its subcellular location is the nucleus. Its function is as follows. ATP-dependent 5'-&gt;3' DNA/RNA helicase required for the expression and maturation of diverse classes of non-protein-coding RNAs like precursor tRNAs, rRNAs and small nuclear (snRNA) and nucleolar (snoRNA) RNAs. Directs RNA polymerase II transcription termination on snoRNAs as well as on several short protein-coding genes. May also play a role in transcription-coupled nucleotide excision repair. The chain is Helicase SEN1 (SEN1) from Saccharomyces cerevisiae (strain ATCC 204508 / S288c) (Baker's yeast).